The chain runs to 469 residues: UDP-N-acetylmuramate--L-alanine ligase (469 aa).

113-119 (GTHGKTT) is a binding site for ATP.

This sequence belongs to the MurCDEF family.

Its subcellular location is the cytoplasm. The catalysed reaction is UDP-N-acetyl-alpha-D-muramate + L-alanine + ATP = UDP-N-acetyl-alpha-D-muramoyl-L-alanine + ADP + phosphate + H(+). It functions in the pathway cell wall biogenesis; peptidoglycan biosynthesis. Functionally, cell wall formation. The protein is UDP-N-acetylmuramate--L-alanine ligase of Neisseria meningitidis serogroup A / serotype 4A (strain DSM 15465 / Z2491).